The primary structure comprises 445 residues: Mitochondrial-processing peptidase subunit alpha-2 (445 aa).

The N-terminal 13 residues, 1-13 (MIGRFIARNYTTS), are a transit peptide targeting the mitochondrion.

Belongs to the peptidase M16 family. Heterodimer of alpha and beta subunits, forming the mitochondrial processing protease (MPP) in which subunit alpha is involved in substrate recognition and binding and subunit beta is the catalytic subunit.

The protein localises to the mitochondrion matrix. Its function is as follows. Substrate recognition and binding subunit of the essential mitochondrial processing protease (MPP), which cleaves the mitochondrial sequence off newly imported precursors proteins. The chain is Mitochondrial-processing peptidase subunit alpha-2 (mppA2) from Dictyostelium discoideum (Social amoeba).